We begin with the raw amino-acid sequence, 59 residues long: Protein ORF5a (59 aa).

A helical; Signal-anchor for type III membrane protein transmembrane segment spans residues 13–33 (VIYDCIAILALGCAITCLLLI).

It is found in the membrane. This is Protein ORF5a (GP5) from Equine arteritis virus (strain Bucyrus) (EAV).